The sequence spans 243 residues: Ribosomal RNA small subunit methyltransferase J (243 aa).

Residues 112-113 (ER) and aspartate 164 contribute to the S-adenosyl-L-methionine site.

This sequence belongs to the methyltransferase superfamily. RsmJ family.

Its subcellular location is the cytoplasm. The enzyme catalyses guanosine(1516) in 16S rRNA + S-adenosyl-L-methionine = N(2)-methylguanosine(1516) in 16S rRNA + S-adenosyl-L-homocysteine + H(+). Specifically methylates the guanosine in position 1516 of 16S rRNA. The polypeptide is Ribosomal RNA small subunit methyltransferase J (Legionella pneumophila subsp. pneumophila (strain Philadelphia 1 / ATCC 33152 / DSM 7513)).